Here is a 654-residue protein sequence, read N- to C-terminus: Kelch-like protein 13 (654 aa).

In terms of domain architecture, BTB spans 91 to 160 (CDVTLMPGDT…IYTAKLSLNM (70 aa)). Positions 195-296 (CVEVGRIANT…TPQELINYVQ (102 aa)) constitute a BACK domain. Kelch repeat units follow at residues 340–388 (RLVT…VIGN), 389–440 (FLYV…ALKG), 441–487 (FLYA…VYGG), 489–534 (MYIS…TVGD), 536–586 (LYVI…VFEN), and 587–635 (KIYV…TLTV).

In terms of assembly, component of the BCR(KLHL9-KLHL13) E3 ubiquitin ligase complex, at least composed of CUL3, KLHL9, KLHL13 and RBX1. Interacts with AURKB.

Its pathway is protein modification; protein ubiquitination. In terms of biological role, substrate-specific adapter of a BCR (BTB-CUL3-RBX1) E3 ubiquitin-protein ligase complex required for mitotic progression and cytokinesis. The BCR(KLHL9-KLHL13) E3 ubiquitin ligase complex mediates the ubiquitination of AURKB and controls the dynamic behavior of AURKB on mitotic chromosomes and thereby coordinates faithful mitotic progression and completion of cytokinesis. The polypeptide is Kelch-like protein 13 (Klhl13) (Mus musculus (Mouse)).